We begin with the raw amino-acid sequence, 1431 residues long: Collagen alpha-1(XVII) chain (1431 aa).

At 1-468 (MDVTKKNKRD…AWCPCGSCCS (468 aa)) the chain is on the cytoplasmic side. Positions 1 to 569 (MDVTKKNKRD…MTEQENGNLR (569 aa)) are nonhelical region (NC16). Disordered stretches follow at residues 25–155 (TRLT…PSTR), 167–188 (KGSR…PIPK), 304–324 (TAYG…TGVS), and 422–449 (SVEN…GGGG). A compositionally biased stretch (low complexity) spans 60-74 (GSSGYINSSGSIRGN). Composition is skewed to polar residues over residues 75 to 96 (ASTS…SPGS), 111 to 120 (EGSSSGNSSP), and 170 to 184 (RSAS…SSTL). The interval 146–231 (RLQSASPSTR…WSSTLPAGSS (86 aa)) is necessary for interaction with DST and for the recruitment of DST to hemidesmosome. A compositionally biased stretch (gly residues) spans 430–449 (RGGGSGGGARGGGGSGGGGG). Residues 469–489 (WWKWLLGLLLTWLLLLGLLFG) traverse the membrane as a helical; Signal-anchor for type II membrane protein segment. Residues 490–1431 (LIALAEEVRK…RRRRSIAIKP (942 aa)) are Extracellular-facing. Ser-547 carries the post-translational modification Phosphoserine; by CK2. 4 disordered regions span residues 564–869 (ENGN…SFIS), 884–996 (DLRG…SSSG), 1158–1178 (DIIG…PGVS), and 1208–1249 (FIIG…SSSV). A triple-helical region region spans residues 570-1417 (GNPGPKGDMG…KGDKGDKGDQ (848 aa)). Composition is skewed to low complexity over residues 657-673 (PRGL…RGPN), 738-751 (EPGA…AGPD), and 778-799 (PGKP…PGRP). 6 stretches are compositionally biased toward pro residues: residues 823–844 (PGPP…PGPA), 889–911 (LGPP…PRGP), 937–946 (PPGPPGPPGP), 979–989 (PPGPPGPPGPP), 1162–1174 (PPGP…PRGP), and 1212–1221 (PPGPPGPQGP). N-linked (GlcNAc...) asparagine glycosylation is present at Asn-1230. Positions 1232–1249 (SWGSSSSARRGTAYSSSV) are enriched in polar residues. N-linked (GlcNAc...) asparagine glycosylation is present at Asn-1356. Residues 1366 to 1431 (RTHGAIPGPP…RRRRSIAIKP (66 aa)) form a disordered region. Basic and acidic residues predominate over residues 1407-1416 (QKGDKGDKGD). The tract at residues 1418–1431 (VYTGRRRRSIAIKP) is nonhelical region (NC1). Over residues 1421-1431 (GRRRRSIAIKP) the composition is skewed to basic residues.

As to quaternary structure, homotrimers of alpha 1(XVII)chains. Interacts (via cytoplasmic region) with ITGB4 (via cytoplasmic region). Interacts (via cytoplasmic region) with DST (via N-terminus). Interacts (via N-terminus) with PLEC. Interacts (via cytoplasmic region) with DSP. In terms of processing, the intracellular/endo domain is disulfide-linked. Post-translationally, prolines at the third position of the tripeptide repeating unit (G-X-Y) are hydroxylated in some or all of the chains. The ectodomain is shedded from the surface of keratinocytes resulting in a 120-kDa soluble form, also named as 120 kDa linear IgA disease antigen homolog. The shedding is mediated by membrane-bound metalloproteases. This cleavage is inhibited by phosphorylation at Ser-547.

Its subcellular location is the cell junction. It localises to the hemidesmosome. It is found in the membrane. The protein resides in the secreted. The protein localises to the extracellular space. Its subcellular location is the extracellular matrix. It localises to the basement membrane. May play a role in the integrity of hemidesmosome and the attachment of basal keratinocytes to the underlying basement membrane. Functionally, the 120 kDa linear IgA disease antigen homolog is an anchoring filament component involved in dermal-epidermal cohesion. The protein is Collagen alpha-1(XVII) chain (COL17A1) of Mesocricetus auratus (Golden hamster).